The primary structure comprises 581 residues: Ras-specific guanine nucleotide-releasing factor RalGPS1 (581 aa).

The tract at residues 1-31 (MYRRNGLPASVSITSRNTQDSSSSESLDGRS) is disordered. The 240-residue stretch at 49-288 (TPEEFASQIT…YSLSLKIEPG (240 aa)) folds into the Ras-GEF domain. The tract at residues 320 to 339 (PDTSVVAHLPTPPPARHRKS) is disordered. The short motif at 329-332 (PTPP) is the PXXP element. Positions 455–567 (SITIEGPLRR…WHRHLAEACR (113 aa)) constitute a PH domain.

The protein localises to the cytoplasm. It localises to the cell membrane. Its function is as follows. Guanine nucleotide exchange factor. May be involved in cytoskeletal organization. This Danio rerio (Zebrafish) protein is Ras-specific guanine nucleotide-releasing factor RalGPS1 (ralgps1).